The chain runs to 102 residues: Small ribosomal subunit protein uS10 (102 aa).

It belongs to the universal ribosomal protein uS10 family. Part of the 30S ribosomal subunit.

In terms of biological role, involved in the binding of tRNA to the ribosomes. The chain is Small ribosomal subunit protein uS10 from Dehalococcoides mccartyi (strain ATCC BAA-2100 / JCM 16839 / KCTC 5957 / BAV1).